The following is a 49-amino-acid chain: DNA-directed RNA polymerase subunit Rpo12 (49 aa).

Zn(2+) is bound by residues C11, C27, and C30.

Belongs to the archaeal Rpo12/eukaryotic RPC10 RNA polymerase subunit family. As to quaternary structure, part of the RNA polymerase complex. The cofactor is Zn(2+).

Its subcellular location is the cytoplasm. The catalysed reaction is RNA(n) + a ribonucleoside 5'-triphosphate = RNA(n+1) + diphosphate. DNA-dependent RNA polymerase (RNAP) catalyzes the transcription of DNA into RNA using the four ribonucleoside triphosphates as substrates. This is DNA-directed RNA polymerase subunit Rpo12 from Pyrococcus horikoshii (strain ATCC 700860 / DSM 12428 / JCM 9974 / NBRC 100139 / OT-3).